The sequence spans 431 residues: Dihydroorotase (431 aa).

Positions 55 and 57 each coordinate Zn(2+). Substrate-binding positions include histidine 57–arginine 59 and asparagine 89. Zn(2+) is bound by residues lysine 139, histidine 169, histidine 223, and aspartate 290. Lysine 139 bears the N6-carboxylysine mark. The active site involves aspartate 290. Residues histidine 294 and proline 308–glycine 309 each bind substrate.

It belongs to the metallo-dependent hydrolases superfamily. DHOase family. Class I DHOase subfamily. Zn(2+) serves as cofactor.

The enzyme catalyses (S)-dihydroorotate + H2O = N-carbamoyl-L-aspartate + H(+). Its pathway is pyrimidine metabolism; UMP biosynthesis via de novo pathway; (S)-dihydroorotate from bicarbonate: step 3/3. Its function is as follows. Catalyzes the reversible cyclization of carbamoyl aspartate to dihydroorotate. The chain is Dihydroorotase from Methanothermobacter thermautotrophicus (strain ATCC 29096 / DSM 1053 / JCM 10044 / NBRC 100330 / Delta H) (Methanobacterium thermoautotrophicum).